A 966-amino-acid chain; its full sequence is Glycine dehydrogenase (decarboxylating) (966 aa).

Lys-713 is subject to N6-(pyridoxal phosphate)lysine.

The protein belongs to the GcvP family. As to quaternary structure, the glycine cleavage system is composed of four proteins: P, T, L and H. Pyridoxal 5'-phosphate is required as a cofactor.

The enzyme catalyses N(6)-[(R)-lipoyl]-L-lysyl-[glycine-cleavage complex H protein] + glycine + H(+) = N(6)-[(R)-S(8)-aminomethyldihydrolipoyl]-L-lysyl-[glycine-cleavage complex H protein] + CO2. Its function is as follows. The glycine cleavage system catalyzes the degradation of glycine. The P protein binds the alpha-amino group of glycine through its pyridoxal phosphate cofactor; CO(2) is released and the remaining methylamine moiety is then transferred to the lipoamide cofactor of the H protein. The polypeptide is Glycine dehydrogenase (decarboxylating) (Shewanella halifaxensis (strain HAW-EB4)).